We begin with the raw amino-acid sequence, 59 residues long: Alpha-like toxin CsEv5 (59 aa).

An LCN-type CS-alpha/beta domain is found at 1–59; sequence KDGYPVDSKGCKLSCVANNYCDNQCKMKKASGGHCYAMSCYCEGLPENAKVSDSATNIC. 4 disulfides stabilise this stretch: C11–C59, C15–C35, C21–C40, and C25–C42.

It belongs to the long (4 C-C) scorpion toxin superfamily. Sodium channel inhibitor family. Expressed by the venom gland.

It is found in the secreted. Functionally, binds voltage-independently sodium channels (Nav) and inhibits the inactivation of the activated channels, thereby blocking neuronal transmission. Is highly toxic to insects and barely toxic to mammals. As it does not compete with the classical alpha-toxin AaH2, this toxin is considered as an alpha-like toxin. This Centruroides sculpturatus (Arizona bark scorpion) protein is Alpha-like toxin CsEv5.